We begin with the raw amino-acid sequence, 323 residues long: Putative divalent cation/proton antiporter TMEM165 (323 aa).

The first 33 residues, 1 to 33 (MAASARGSGRAPTRRLLVLLLLPLLWAPAGVRA), serve as a signal peptide directing secretion. Topologically, residues 34–88 (GPEEDLSHRNQEPPAPAQQLQPQPAAVQGLEPARAEKGFTPAAPVHTNREDAATQ) are lumenal. A compositionally biased stretch (basic and acidic residues) spans 35–44 (PEEDLSHRNQ). The segment at 35-60 (PEEDLSHRNQEPPAPAQQLQPQPAAV) is disordered. The segment covering 50–59 (AQQLQPQPAA) has biased composition (low complexity). The helical transmembrane segment at 89–109 (ANLGFIHAFVAAISVIIVSEL) threads the bilayer. Residues 110 to 126 (GDKTFFIAAIMAMRYNR) are Cytoplasmic-facing. The chain crosses the membrane as a helical span at residues 127 to 147 (LTVLAGAMLALALMTCLSVLF). Residues 148–151 (GYAT) are Lumenal-facing. The chain crosses the membrane as a helical span at residues 152–172 (TVIPRVYTYYVSTALFAIFGI). Over 173–227 (RMLREGLKMSPDEGQEELEEVQAELKKKDEEFQRTKLLNGPDVETGTSTAIPQKK) the chain is Cytoplasmic. A coiled-coil region spans residues 184-211 (DEGQEELEEVQAELKKKDEEFQRTKLLN). A helical transmembrane segment spans residues 228-248 (WLHFISPIFVQALTLTFLAEW). At 249–266 (GDRSQLTTIVLAAREDPY) the chain is on the lumenal side. A helical membrane pass occupies residues 267–287 (GVAVGGTVGHCLCTGLAVIGG). At 288 to 298 (RMIAQKISVRT) the chain is on the cytoplasmic side. Residues 299–319 (VTIIGGIVFLAFAFSALFISP) traverse the membrane as a helical segment. Residues 320–323 (ESGF) are Lumenal-facing.

It belongs to the GDT1 family.

It localises to the golgi apparatus membrane. It carries out the reaction Ca(2+)(in) + n H(+)(out) = Ca(2+)(out) + n H(+)(in). The catalysed reaction is Mn(2+)(in) + n H(+)(out) = Mn(2+)(out) + n H(+)(in). Functionally, putative divalent cation:proton antiporter that exchanges calcium or manganese ions for protons across the Golgi membrane. Mediates the reversible transport of calcium or manganese to the Golgi lumen driven by the proton gradient and possibly the membrane potential generated by V-ATPase. Provides calcium or manganese cofactors to resident Golgi enzymes and contributes to the maintenance of an acidic luminal Golgi pH required for proper functioning of the secretory pathway. Promotes Ca(2+) storage within the Golgi lumen of the mammary epithelial cells to be then secreted into milk. The transport mechanism and stoichiometry remains to be elucidated. The chain is Putative divalent cation/proton antiporter TMEM165 from Rattus norvegicus (Rat).